Reading from the N-terminus, the 776-residue chain is Venom dipeptidyl peptidase 4 (776 aa).

The N-terminal stretch at 1-25 (MVPLRSFVLLNSLFLVLLAARTVVT) is a signal peptide. 3 N-linked (GlcNAc...) asparagine glycosylation sites follow: asparagine 44, asparagine 66, and asparagine 329. 2 disulfides stabilise this stretch: cysteine 449–cysteine 452 and cysteine 462–cysteine 480. N-linked (GlcNAc...) asparagine glycosylation is found at asparagine 504 and asparagine 577. Serine 638 serves as the catalytic Charge relay system. Cysteines 658 and 769 form a disulfide. Asparagine 688 and asparagine 693 each carry an N-linked (GlcNAc...) asparagine glycan. Residues aspartate 717 and histidine 749 each act as charge relay system in the active site.

Belongs to the peptidase S9B family. DPPIV subfamily. Expressed by the venom gland.

It is found in the secreted. The enzyme catalyses Release of an N-terminal dipeptide, Xaa-Yaa-|-Zaa-, from a polypeptide, preferentially when Yaa is Pro, provided Zaa is neither Pro nor hydroxyproline.. Inhibited by diprotin A. Functionally, venom dipeptidyl-peptidase which removes N-terminal dipeptides sequentially from polypeptides having unsubstituted N-termini provided that the penultimate residue is proline. May process venom proteins into their active forms and/or modulate the chemotactic activity of immune cells after the insect sting. This Vespula vulgaris (Yellow jacket) protein is Venom dipeptidyl peptidase 4.